The chain runs to 164 residues: E3 ubiquitin ligase complex SCF subunit sconC (164 aa).

Positions 106-164 are interaction with the F-box domain of F-box proteins; it reads ILAANYLDIKALLDVGCKTVANMIKGKSPEEIRKTFNIQNDFTPEEEDQIRRENEWAEE.

It belongs to the SKP1 family. Component of the SCF (SKP1-CUL1-F-box protein) E3 ubiquitin ligase complexes.

The protein operates within protein modification; protein ubiquitination. In terms of biological role, essential component of the SCF (SKP1-CUL1-F-box protein) E3 ubiquitin ligase complexes, which mediate the ubiquitination and subsequent proteasomal degradation of target proteins. Controls sulfur metabolite repression, probably by mediating the inactivation or degradation of the metR transcription factor. In Arthroderma benhamiae (strain ATCC MYA-4681 / CBS 112371) (Trichophyton mentagrophytes), this protein is E3 ubiquitin ligase complex SCF subunit sconC (sconC).